A 208-amino-acid chain; its full sequence is Methylthioribulose-1-phosphate dehydratase (208 aa).

The Zn(2+) site is built by His98 and His100.

It belongs to the aldolase class II family. MtnB subfamily. It depends on Zn(2+) as a cofactor.

It carries out the reaction 5-(methylsulfanyl)-D-ribulose 1-phosphate = 5-methylsulfanyl-2,3-dioxopentyl phosphate + H2O. It participates in amino-acid biosynthesis; L-methionine biosynthesis via salvage pathway; L-methionine from S-methyl-5-thio-alpha-D-ribose 1-phosphate: step 2/6. Functionally, catalyzes the dehydration of methylthioribulose-1-phosphate (MTRu-1-P) into 2,3-diketo-5-methylthiopentyl-1-phosphate (DK-MTP-1-P). The polypeptide is Methylthioribulose-1-phosphate dehydratase (Hahella chejuensis (strain KCTC 2396)).